Consider the following 223-residue polypeptide: DNA mismatch repair protein MutH (223 aa).

The protein belongs to the MutH family.

Its subcellular location is the cytoplasm. In terms of biological role, sequence-specific endonuclease that cleaves unmethylated GATC sequences. It is involved in DNA mismatch repair. This is DNA mismatch repair protein MutH from Shewanella sp. (strain W3-18-1).